Reading from the N-terminus, the 406-residue chain is Tubby-like F-box protein 11 (406 aa).

One can recognise an F-box domain in the interval 53 to 108; it reads SCWTQLPPELLREVLARVEESEGWWPRRRDVVACAGVCRSWRGIVREIVRTPEASG.

It belongs to the TUB family. Ubiquitous.

This Oryza sativa subsp. japonica (Rice) protein is Tubby-like F-box protein 11 (TULP11).